Reading from the N-terminus, the 368-residue chain is MSRIDDLQQDIESLLSEINSLEESREKLKAKIKDKRKNEESANPIVQEFEDLFDQFPQLNNFLFNEHPELEETDDKDISRAQADIPATPIPYEPKKRAKLENEEILPEQEWVLKTQPMVQHQMFDPGVADLLDTDILTSPSKRKRKLKIDDISTSDRSELEDYIVLENVYRMFGITFFPLVDPIDLKIKDASGEIFVDREMLGIRLEVFSERTSQFEKPHYVLLKKRIKSNSWFLFKHTIPSFIDVQGIFDDTNGGLVISHDDAYLFAKRVFLQLVEVQKRRQIFKDLEAKKIIHDLDLDLESSMVSFFVKDIKVELFVKQNEIVSCSILDDIHDFSQNNKSKWEIALLGSLDDLELKLNHSFATIFK.

Residues 1–43 (MSRIDDLQQDIESLLSEINSLEESREKLKAKIKDKRKNEESAN) adopt a coiled-coil conformation. Residue T88 is modified to Phosphothreonine.

It belongs to the CENP-O/MCM21 family. As to quaternary structure, component of the heterotetrameric kinetochore subcomplex COMA, which consists of AME1, CTF19, MCM21 and OKP1. The COMA subcomplex is part of a larger constitutive centromere-associated network (CCAN) (also known as central kinetochore CTF19 complex in yeast), which is composed of at least AME1, CHL4, CNN1, CTF3, CTF19, IML3, MCM16, MCM21, MCM22, MHF1, MHF2, MIF2, NKP1, NKP2, OKP1 and WIP1. COMA binds the centromeric nucleosome-binding protein MIF2, and to the outer kinetochore MIND subcomplex.

It localises to the nucleus. The protein localises to the chromosome. Its subcellular location is the centromere. It is found in the kinetochore. Its function is as follows. Component of the kinetochore, a multiprotein complex that assembles on centromeric DNA and attaches chromosomes to spindle microtubules, mediating chromosome segregation and sister chromatid segregation during meiosis and mitosis. Component of the inner kinetochore COMA complex, which connects centromere-associated proteins and the outer kinetochore. COMA interacts with other inner kinetochore proteins to form the inner kinetochore constitutive centromere-associated network (CCAN), which serves as a structural platform for outer kinetochore assembly. In Saccharomyces cerevisiae (strain ATCC 204508 / S288c) (Baker's yeast), this protein is Inner kinetochore subunit MCM21 (MCM21).